The primary structure comprises 302 residues: Sulfate adenylyltransferase subunit 2 (302 aa).

It belongs to the PAPS reductase family. CysD subfamily. Heterodimer composed of CysD, the smaller subunit, and CysN.

The enzyme catalyses sulfate + ATP + H(+) = adenosine 5'-phosphosulfate + diphosphate. The protein operates within sulfur metabolism; hydrogen sulfide biosynthesis; sulfite from sulfate: step 1/3. Its function is as follows. With CysN forms the ATP sulfurylase (ATPS) that catalyzes the adenylation of sulfate producing adenosine 5'-phosphosulfate (APS) and diphosphate, the first enzymatic step in sulfur assimilation pathway. APS synthesis involves the formation of a high-energy phosphoric-sulfuric acid anhydride bond driven by GTP hydrolysis by CysN coupled to ATP hydrolysis by CysD. This chain is Sulfate adenylyltransferase subunit 2, found in Salmonella schwarzengrund (strain CVM19633).